Consider the following 555-residue polypeptide: CTP synthase (555 aa).

Residues 1 to 270 (MTKFVFVTGG…DGLICDKLRL (270 aa)) are amidoligase domain. S13 serves as a coordination point for CTP. Residue S13 participates in UTP binding. Residues 14 to 19 (SLGKGI) and D71 contribute to the ATP site. Mg(2+) contacts are provided by D71 and E144. Residues 151-153 (DIE), 191-196 (KTKPTQ), and K227 contribute to the CTP site. UTP-binding positions include 191-196 (KTKPTQ) and K227. The 253-residue stretch at 295–547 (NIVMVGKYVE…IKAALDHQAA (253 aa)) folds into the Glutamine amidotransferase type-1 domain. G356 is an L-glutamine binding site. The Nucleophile; for glutamine hydrolysis role is filled by C383. L-glutamine is bound by residues 384–387 (LGMQ), E407, and R473. Residues H520 and E522 contribute to the active site.

It belongs to the CTP synthase family. Homotetramer.

It catalyses the reaction UTP + L-glutamine + ATP + H2O = CTP + L-glutamate + ADP + phosphate + 2 H(+). The enzyme catalyses L-glutamine + H2O = L-glutamate + NH4(+). It carries out the reaction UTP + NH4(+) + ATP = CTP + ADP + phosphate + 2 H(+). The protein operates within pyrimidine metabolism; CTP biosynthesis via de novo pathway; CTP from UDP: step 2/2. With respect to regulation, allosterically activated by GTP, when glutamine is the substrate; GTP has no effect on the reaction when ammonia is the substrate. The allosteric effector GTP functions by stabilizing the protein conformation that binds the tetrahedral intermediate(s) formed during glutamine hydrolysis. Inhibited by the product CTP, via allosteric rather than competitive inhibition. Its function is as follows. Catalyzes the ATP-dependent amination of UTP to CTP with either L-glutamine or ammonia as the source of nitrogen. Regulates intracellular CTP levels through interactions with the four ribonucleotide triphosphates. The sequence is that of CTP synthase from Albidiferax ferrireducens (strain ATCC BAA-621 / DSM 15236 / T118) (Rhodoferax ferrireducens).